The following is a 311-amino-acid chain: Methionyl-tRNA formyltransferase (311 aa).

Residue 110–113 (SLLP) participates in (6S)-5,6,7,8-tetrahydrofolate binding.

The protein belongs to the Fmt family.

The enzyme catalyses L-methionyl-tRNA(fMet) + (6R)-10-formyltetrahydrofolate = N-formyl-L-methionyl-tRNA(fMet) + (6S)-5,6,7,8-tetrahydrofolate + H(+). In terms of biological role, attaches a formyl group to the free amino group of methionyl-tRNA(fMet). The formyl group appears to play a dual role in the initiator identity of N-formylmethionyl-tRNA by promoting its recognition by IF2 and preventing the misappropriation of this tRNA by the elongation apparatus. The polypeptide is Methionyl-tRNA formyltransferase (Streptococcus mutans serotype c (strain ATCC 700610 / UA159)).